A 338-amino-acid polypeptide reads, in one-letter code: Phenylalanine--tRNA ligase alpha subunit (338 aa).

Glu252 serves as a coordination point for Mg(2+).

This sequence belongs to the class-II aminoacyl-tRNA synthetase family. Phe-tRNA synthetase alpha subunit type 1 subfamily. As to quaternary structure, tetramer of two alpha and two beta subunits. The cofactor is Mg(2+).

The protein localises to the cytoplasm. It catalyses the reaction tRNA(Phe) + L-phenylalanine + ATP = L-phenylalanyl-tRNA(Phe) + AMP + diphosphate + H(+). This Pseudomonas aeruginosa (strain UCBPP-PA14) protein is Phenylalanine--tRNA ligase alpha subunit.